A 371-amino-acid polypeptide reads, in one-letter code: tRNA-specific 2-thiouridylase MnmA (371 aa).

ATP contacts are provided by residues 22-29 (GLSGGVDS) and Met48. The interaction with target base in tRNA stretch occupies residues 108–110 (NPD). Cys113 acts as the Nucleophile in catalysis. Cysteines 113 and 209 form a disulfide. Residue Gly137 participates in ATP binding. Residues 159–161 (KDQ) are interaction with tRNA. The active-site Cysteine persulfide intermediate is the Cys209.

Belongs to the MnmA/TRMU family.

The protein localises to the cytoplasm. It catalyses the reaction S-sulfanyl-L-cysteinyl-[protein] + uridine(34) in tRNA + AH2 + ATP = 2-thiouridine(34) in tRNA + L-cysteinyl-[protein] + A + AMP + diphosphate + H(+). Catalyzes the 2-thiolation of uridine at the wobble position (U34) of tRNA, leading to the formation of s(2)U34. This chain is tRNA-specific 2-thiouridylase MnmA, found in Coxiella burnetii (strain CbuK_Q154) (Coxiella burnetii (strain Q154)).